The primary structure comprises 251 residues: MAQVNKQAIAAAFGRAASQYEQHASLQQHSADALLTLLTGRQFASVLDAGCGPGRMSRYWRERGSEVTALDLSLPMLQQARDRQAAHHYLLADIEAIPHDAEVFDLAWSNLAVQWCGDLRDALSELYRVVRPGGVVAFTTLCQGSLPELRQAWQAVDNRAHANSFLPEEAIDHALRGWRAFRHTQAMTLWFEDALSAMRSLKGIGATHLHEGRESDVLTRARLRQIQLAWPQRQGKYPLTYHLFMGVIERD.

This sequence belongs to the methyltransferase superfamily.

It carries out the reaction malonyl-[ACP] + S-adenosyl-L-methionine = malonyl-[ACP] methyl ester + S-adenosyl-L-homocysteine. It participates in cofactor biosynthesis; biotin biosynthesis. In terms of biological role, converts the free carboxyl group of a malonyl-thioester to its methyl ester by transfer of a methyl group from S-adenosyl-L-methionine (SAM). It allows to synthesize pimeloyl-ACP via the fatty acid synthetic pathway. The protein is Malonyl-[acyl-carrier protein] O-methyltransferase of Salmonella typhimurium (strain LT2 / SGSC1412 / ATCC 700720).